The sequence spans 243 residues: Isoprenyl transferase 2 (243 aa).

Residue aspartate 23 is part of the active site. Mg(2+) is bound at residue aspartate 23. Residues 24–27 (GNGR), tryptophan 28, arginine 36, histidine 40, and 68–70 (STE) each bind substrate. The active-site Proton acceptor is the asparagine 71. Substrate contacts are provided by residues tryptophan 72, arginine 74, arginine 191, and 197 to 199 (RTS). Glutamate 210 serves as a coordination point for Mg(2+).

It belongs to the UPP synthase family. Homodimer. It depends on Mg(2+) as a cofactor.

Catalyzes the condensation of isopentenyl diphosphate (IPP) with allylic pyrophosphates generating different type of terpenoids. This Corynebacterium efficiens (strain DSM 44549 / YS-314 / AJ 12310 / JCM 11189 / NBRC 100395) protein is Isoprenyl transferase 2.